The following is a 457-amino-acid chain: Multidrug resistance protein MdtK (457 aa).

12 helical membrane-spanning segments follow: residues L11–V31, I53–A73, W93–I113, A127–A147, G160–Y180, V191–W211, L243–V263, I276–T296, R316–M336, V350–I370, I387–A407, and P418–L438.

The protein belongs to the multi antimicrobial extrusion (MATE) (TC 2.A.66.1) family. MdtK subfamily.

It is found in the cell inner membrane. In terms of biological role, multidrug efflux pump that functions probably as a Na(+)/drug antiporter. The sequence is that of Multidrug resistance protein MdtK from Klebsiella pneumoniae (strain 342).